The chain runs to 511 residues: Histidine ammonia-lyase (511 aa).

The segment at residues alanine 142–glycine 144 is a cross-link (5-imidazolinone (Ala-Gly)). The residue at position 143 (serine 143) is a 2,3-didehydroalanine (Ser).

This sequence belongs to the PAL/histidase family. Post-translationally, contains an active site 4-methylidene-imidazol-5-one (MIO), which is formed autocatalytically by cyclization and dehydration of residues Ala-Ser-Gly.

The protein resides in the cytoplasm. The enzyme catalyses L-histidine = trans-urocanate + NH4(+). It participates in amino-acid degradation; L-histidine degradation into L-glutamate; N-formimidoyl-L-glutamate from L-histidine: step 1/3. The chain is Histidine ammonia-lyase (hutH) from Rhizobium meliloti (strain 1021) (Ensifer meliloti).